Consider the following 188-residue polypeptide: Ribosome maturation factor RimM (188 aa).

Positions 112–187 (SDSYYWVDLI…LLTLDWQSDW (76 aa)) constitute a PRC barrel domain.

Belongs to the RimM family. As to quaternary structure, binds ribosomal protein uS19.

It localises to the cytoplasm. In terms of biological role, an accessory protein needed during the final step in the assembly of 30S ribosomal subunit, possibly for assembly of the head region. Essential for efficient processing of 16S rRNA. May be needed both before and after RbfA during the maturation of 16S rRNA. It has affinity for free ribosomal 30S subunits but not for 70S ribosomes. This chain is Ribosome maturation factor RimM, found in Polynucleobacter asymbioticus (strain DSM 18221 / CIP 109841 / QLW-P1DMWA-1) (Polynucleobacter necessarius subsp. asymbioticus).